Here is a 95-residue protein sequence, read N- to C-terminus: Ribonuclease kappa-B (95 aa).

Transmembrane regions (helical) follow at residues 12 to 32 and 68 to 88; these read GLIISVWGIIQLVLMGLFFYI and CWIAACIYVLTLLLSAQQFYV.

The protein belongs to the RNase K family.

It localises to the membrane. Its activity is regulated as follows. Inhibited by Zn(2+) and Hg(2+), while it is unaffected by Ca(2+). Endoribonuclease which displays activity against poly(C) and poly(U) synthetic substrates, as well as rRNA. This chain is Ribonuclease kappa-B, found in Ceratitis capitata (Mediterranean fruit fly).